The chain runs to 394 residues: Phosphoglycerate kinase (394 aa).

Residues 21–23 (DFN), Arg36, 59–62 (HLGR), Arg118, and Arg151 contribute to the substrate site. The residue at position 183 (Ser183) is a Phosphoserine. Position 201 (Lys201) interacts with ATP. Thr299 carries the post-translational modification Phosphothreonine. Residues Glu323 and 350 to 353 (GGDS) each bind ATP.

The protein belongs to the phosphoglycerate kinase family. As to quaternary structure, monomer.

Its subcellular location is the cytoplasm. The enzyme catalyses (2R)-3-phosphoglycerate + ATP = (2R)-3-phospho-glyceroyl phosphate + ADP. It participates in carbohydrate degradation; glycolysis; pyruvate from D-glyceraldehyde 3-phosphate: step 2/5. This chain is Phosphoglycerate kinase, found in Bacillus pumilus (strain SAFR-032).